A 499-amino-acid polypeptide reads, in one-letter code: Aprataxin and PNK-like factor (499 aa).

An FHA-like domain is found at 1–108; that stretch reads MPSDFFLQPL…RVFSAESEVE (108 aa). Residue S116 is modified to Phosphoserine; by ATM. 3 disordered regions span residues 134–183, 197–292, and 305–358; these read VNLP…TQRK, DQSL…KTNK, and VSKH…DTAD. Over residues 141 to 152 the composition is skewed to polar residues; sequence TGASQLQGSPEI. Residue S149 is modified to Phosphoserine. A KBM motif is present at residues 182-191; that stretch reads RKRILPAWML. The span at 239 to 248 shows a compositional bias: polar residues; the sequence is PSGNSKSVSA. Basic and acidic residues predominate over residues 251-261; that stretch reads DPGKKCRKADQ. Over residues 264–278 the composition is skewed to low complexity; the sequence is PGVSSENVPESSSSN. Positions 281 to 292 are enriched in basic and acidic residues; that stretch reads KDPDVDIVKTNK. A compositionally biased stretch (low complexity) spans 340-349; the sequence is PESSSAPSSP. Residues R371, Y376, Y381, and R382 each coordinate a glycoprotein. The segment at 372 to 393 adopts a PBZ-type 1 zinc-finger fold; the sequence is TACMYGANCYRRNPLHFQHFSH. A flexible linker region spans residues 401 to 411; sequence EVHGTDEGVIG. Residues 414-435 form a PBZ-type 2 zinc finger; that stretch reads PECPYGASCYRKNPQHKMEYRH. Residues Y418, Y423, and R424 each contribute to the a glycoprotein site. The segment at 440 to 499 is disordered; that stretch reads ARVALDEDDDDVGQPSDDEDEEDYEPTDEDSDWHPGKDDEEQEDVDELLKEAKSSLHLKH. The span at 445-470 shows a compositional bias: acidic residues; that stretch reads DEDDDDVGQPSDDEDEEDYEPTDEDS. The NAP1L motif motif lies at 463 to 487; that stretch reads YEPTDEDSDWHPGKDDEEQEDVDEL.

The protein belongs to the APLF family. Interacts with LIG4. Interacts with PARP1. Interacts with XRCC4. Interacts (via KBM motif) with XRCC5 and XRCC6; promoting recruitment to DNA damage sites. Interacts with XRCC1. Interacts (via C-terminal disordered region) with histones; interacts with histone H2A, H2B and H3-H4. Post-translationally, poly-ADP-ribosylated. In addition to binding non covalently poly-ADP-ribose via its PBZ-type zinc fingers, the protein is also covalently poly-ADP-ribosylated by PARP1. In terms of processing, phosphorylated in an ATM-dependent manner upon double-strand DNA break.

It is found in the nucleus. The protein resides in the chromosome. The protein localises to the cytoplasm. Its subcellular location is the cytosol. Functionally, histone chaperone involved in single-strand and double-strand DNA break repair. Recruited to sites of DNA damage through interaction with branched poly-ADP-ribose chains, a polymeric post-translational modification synthesized transiently at sites of chromosomal damage to accelerate DNA strand break repair reactions. Following recruitment to DNA damage sites, acts as a histone chaperone that mediates histone eviction during DNA repair and promotes recruitment of histone variant MACROH2A1. Also has a nuclease activity: displays apurinic-apyrimidinic (AP) endonuclease and 3'-5' exonuclease activities in vitro. Also able to introduce nicks at hydroxyuracil and other types of pyrimidine base damage. Together with PARP3, promotes the retention of the LIG4-XRCC4 complex on chromatin and accelerate DNA ligation during non-homologous end-joining (NHEJ). Also acts as a negative regulator of cell pluripotency by promoting histone exchange. Required for the embryo implantation during the epithelial to mesenchymal transition in females. The chain is Aprataxin and PNK-like factor (Aplf) from Mus musculus (Mouse).